The following is a 488-amino-acid chain: (S)-N-methylcoclaurine 3'-hydroxylase isozyme 2 (488 aa).

The chain crosses the membrane as a helical span at residues 3–23 (VVTVALIAVIISSILYLLFGS). Cys430 provides a ligand contact to heme.

This sequence belongs to the cytochrome P450 family. Heme serves as cofactor.

The protein resides in the endoplasmic reticulum membrane. Its subcellular location is the microsome membrane. It carries out the reaction (S)-N-methylcoclaurine + reduced [NADPH--hemoprotein reductase] + O2 = (S)-3'-hydroxy-N-methylcoclaurine + oxidized [NADPH--hemoprotein reductase] + H2O + H(+). It functions in the pathway alkaloid biosynthesis; (S)-reticuline biosynthesis; (S)-reticuline from (S)-norcoclaurine: step 3/4. In terms of biological role, 3'-hydroxylation of (S)-N-methylcoclaurine. In Eschscholzia californica (California poppy), this protein is (S)-N-methylcoclaurine 3'-hydroxylase isozyme 2 (CYP80B2).